A 264-amino-acid polypeptide reads, in one-letter code: Thymidylate synthase (264 aa).

Residues R21 and 126–127 (RR) contribute to the dUMP site. C146 functions as the Nucleophile in the catalytic mechanism. DUMP-binding positions include 166 to 169 (RSAD), N177, and 207 to 209 (HLY). Position 169 (D169) interacts with (6R)-5,10-methylene-5,6,7,8-tetrahydrofolate. A263 is a binding site for (6R)-5,10-methylene-5,6,7,8-tetrahydrofolate.

It belongs to the thymidylate synthase family. Bacterial-type ThyA subfamily. Homodimer.

It is found in the cytoplasm. The catalysed reaction is dUMP + (6R)-5,10-methylene-5,6,7,8-tetrahydrofolate = 7,8-dihydrofolate + dTMP. The protein operates within pyrimidine metabolism; dTTP biosynthesis. Its function is as follows. Catalyzes the reductive methylation of 2'-deoxyuridine-5'-monophosphate (dUMP) to 2'-deoxythymidine-5'-monophosphate (dTMP) while utilizing 5,10-methylenetetrahydrofolate (mTHF) as the methyl donor and reductant in the reaction, yielding dihydrofolate (DHF) as a by-product. This enzymatic reaction provides an intracellular de novo source of dTMP, an essential precursor for DNA biosynthesis. In Bradyrhizobium diazoefficiens (strain JCM 10833 / BCRC 13528 / IAM 13628 / NBRC 14792 / USDA 110), this protein is Thymidylate synthase.